A 306-amino-acid chain; its full sequence is Pseudouridine-5'-phosphate glycosidase (306 aa).

Catalysis depends on Glu28, which acts as the Proton donor. 2 residues coordinate substrate: Lys89 and Val109. Asp139 contributes to the Mn(2+) binding site. Substrate is bound at residue 141–143 (SAD). The active-site Nucleophile is the Lys160.

The protein belongs to the pseudouridine-5'-phosphate glycosidase family. Homotrimer. The cofactor is Mn(2+).

It catalyses the reaction D-ribose 5-phosphate + uracil = psi-UMP + H2O. Its function is as follows. Catalyzes the reversible cleavage of pseudouridine 5'-phosphate (PsiMP) to ribose 5-phosphate and uracil. Functions biologically in the cleavage direction, as part of a pseudouridine degradation pathway. This Gemmatimonas aurantiaca (strain DSM 14586 / JCM 11422 / NBRC 100505 / T-27) protein is Pseudouridine-5'-phosphate glycosidase.